We begin with the raw amino-acid sequence, 621 residues long: DnaJ homolog subfamily C member 2 (621 aa).

Residue Met-1 is modified to N-acetylmethionine. 4 positions are modified to phosphoserine: Ser-47, Ser-49, Ser-60, and Ser-63. Positions 88–161 constitute a J domain; the sequence is DHYAVLGLGH…VKRRAFNSVD (74 aa). Residues 160–250 are ZRF1-UBD; the sequence is VDPTFDNSVP…RDERRWIEKQ (91 aa). The residue at position 183 (Ser-183) is a Phosphoserine. Disordered stretches follow at residues 294-315 and 426-453; these read EKKA…QRQA and KEEA…GSKH. 2 consecutive SANT domains span residues 449 to 511 and 549 to 604; these read NGSK…KLDP and TDFT…EMVK.

Component of ribosome-associated complex (RAC), a heterodimer composed of Hsp70/DnaK-type chaperone HSPA14 and Hsp40/DnaJ-type chaperone DNAJC2. Interacts (via ZRF1-UBD region) with ID1. Post-translationally, phosphorylated in M (mitotic) phase.

Its subcellular location is the nucleus. It localises to the cytoplasm. It is found in the cytosol. Functionally, acts both as a chaperone in the cytosol and as a chromatin regulator in the nucleus. When cytosolic, acts as a molecular chaperone: component of the ribosome-associated complex (RAC), a complex involved in folding or maintaining nascent polypeptides in a folding-competent state. In the RAC complex, stimulates the ATPase activity of the ribosome-associated pool of Hsp70-type chaperones HSPA14 that bind to the nascent polypeptide chain. When nuclear, mediates the switching from polycomb-repressed genes to an active state: specifically recruited at histone H2A ubiquitinated at 'Lys-119' (H2AK119ub), and promotes the displacement of the polycomb PRC1 complex from chromatin, thereby facilitating transcription activation. This is DnaJ homolog subfamily C member 2 (DNAJC2) from Bos taurus (Bovine).